The following is a 104-amino-acid chain: U20-lycotoxin-Ls1a (104 aa).

The first 30 residues, methionine 1–alanine 30, serve as a signal peptide directing secretion. Positions glycine 31–serine 76 constitute a WAP domain. Intrachain disulfides connect cysteine 34/cysteine 64, cysteine 42/cysteine 68, cysteine 51/cysteine 63, cysteine 52/cysteine 90, and cysteine 57/cysteine 72.

It belongs to the venom protein 11 family. 02 (wap-2) subfamily. Contains 5 disulfide bonds. In terms of tissue distribution, expressed by the venom gland.

The protein localises to the secreted. Its function is as follows. Has antibacterial activity. This chain is U20-lycotoxin-Ls1a, found in Lycosa singoriensis (Wolf spider).